Consider the following 37-residue polypeptide: Cytochrome b6-f complex subunit 5 (37 aa).

The helical transmembrane segment at 5 to 25 (LLSGIVLGLIPITLAGLFVTA) threads the bilayer.

Belongs to the PetG family. The 4 large subunits of the cytochrome b6-f complex are cytochrome b6, subunit IV (17 kDa polypeptide, PetD), cytochrome f and the Rieske protein, while the 4 small subunits are PetG, PetL, PetM and PetN. The complex functions as a dimer.

The protein resides in the plastid. It localises to the chloroplast thylakoid membrane. In terms of biological role, component of the cytochrome b6-f complex, which mediates electron transfer between photosystem II (PSII) and photosystem I (PSI), cyclic electron flow around PSI, and state transitions. PetG is required for either the stability or assembly of the cytochrome b6-f complex. This is Cytochrome b6-f complex subunit 5 from Zygnema circumcarinatum (Green alga).